The chain runs to 28 residues: Taicatoxin, alpha-neurotoxin-like component (28 aa).

C3 and C21 form a disulfide bridge.

This sequence belongs to the three-finger toxin family. Long-chain subfamily. Type II alpha-neurotoxin sub-subfamily. In terms of assembly, heterotrimer composed of this alpha-neurotoxin-like peptide of 8 kDa, a neurotoxic phospholipase of 16 kDa (AC Q7LZG2) and a serine protease inhibitor of 7 kDa (AC B7S4N9) at an approximate stoichiometry of 1:1:4; non-covalently linked. As to expression, expressed by the venom gland.

The protein resides in the secreted. In terms of biological role, the heterotrimer blocks the voltage-dependent L-type calcium channels (Cav1/CACNA1) from the heart, and the small conductance calcium-activated potassium channels (KCa2/KCNN) in the chromaffin cells and in the brain. Is very toxic to mice. This Oxyuranus scutellatus scutellatus (Australian taipan) protein is Taicatoxin, alpha-neurotoxin-like component.